The primary structure comprises 1893 residues: Nestin (1893 aa).

Methionine 1 carries the N-acetylmethionine modification. Residues 1–7 (MEGCVGE) are head. The coil 1A stretch occupies residues 8–43 (ESFQMWELNRRLEAYLTRVKTLEEQNQLLSAELGGL). In terms of domain architecture, IF rod spans 8–314 (ESFQMWELNR…TLLEAENSRL (307 aa)). A linker 1 region spans residues 44-55 (RAQSGDTSWRAR). The tract at residues 56–151 (ADDELASLRI…AAHEEERAHL (96 aa)) is coil 1B. Residues 150–172 (HLNAQAACAPRRPPAPPHGSPVR) form a disordered region. Residues 152–174 (NAQAACAPRRPPAPPHGSPVRAP) are linker 12. The segment at 175–193 (EVEDLARRLGEVWRGAVRD) is coil 2A. The linker 2 stretch occupies residues 194–196 (YQE). A coil 2B region spans residues 197–314 (RVAHMESSLG…TLLEAENSRL (118 aa)). Serine 312 carries the post-translational modification Phosphoserine. A tail region spans residues 315–1893 (QTPGRGSQAS…DGDSWSSGED (1579 aa)). Phosphothreonine is present on threonine 316. Residues serine 356 and serine 359 each carry the phosphoserine modification. Residue threonine 389 is modified to Phosphothreonine. 3 disordered regions span residues 437–479 (PELE…SGSR), 507–529 (NSSAQKTQESGLDTEETQDSQGP), and 556–879 (KENC…NQKS). Positions 507-517 (NSSAQKTQESG) are enriched in polar residues. Serine 562 carries the phosphoserine modification. Composition is skewed to basic and acidic residues over residues 572–595 (GPEKEKQIPLKSLEEKNVESEKTL) and 606–615 (LGKEDTRTED). Residue serine 620 is modified to Phosphoserine. Composition is skewed to basic and acidic residues over residues 634 to 646 (ESQEVVRPSKEGN) and 670 to 681 (MLERLVEKEDQS). Residues serine 685 and serine 729 each carry the phosphoserine modification. Composition is skewed to basic and acidic residues over residues 717–730 (RLIEKESQESLRSP), 761–774 (RLIEKESQESLRSA), 802–818 (ILERLIEKESQESLRSP), and 846–879 (MLERLIEKESQESLKSPEENQRIGKPLERENQKS). A Phosphoserine modification is found at serine 817. Serine 903 bears the Phosphoserine mark. Basic and acidic residues-rich tracts occupy residues 949-966 (LLEDKTHKSLGSLEDRNG) and 989-1051 (QRIV…KSLE). A disordered region spans residues 949–1130 (LLEDKTHKSL…ARSLGKENQE (182 aa)). 2 positions are modified to phosphoserine: serine 1005 and serine 1049. Lysine 1136 is covalently cross-linked (Glycyl lysine isopeptide (Lys-Gly) (interchain with G-Cter in SUMO1); alternate). Lysine 1136 is covalently cross-linked (Glycyl lysine isopeptide (Lys-Gly) (interchain with G-Cter in SUMO2); alternate). Phosphoserine occurs at positions 1145 and 1166. Residues 1155–1222 (ETAEEDLERR…ELSSLGKWNV (68 aa)) are disordered. Positions 1198–1212 (DENRETLTSLEKESQ) are enriched in basic and acidic residues. Phosphoserine is present on residues serine 1216 and serine 1229. Residues 1237 to 1263 (EGLQEEQHQESLREVKQELPSSGNQQR) form a disordered region. Residues 1241–1253 (EEQHQESLREVKQ) are compositionally biased toward basic and acidic residues. Serine 1322 is modified (phosphoserine). 2 disordered regions span residues 1336–1369 (DNLEGGALEVPVAQSMPEVTERDEDRAQAGEQDS) and 1388–1824 (EVVG…SEQV). Basic and acidic residues-rich tracts occupy residues 1354–1363 (VTERDEDRAQ) and 1393–1403 (EDPRHFAREEA). Composition is skewed to acidic residues over residues 1458–1469 (ESMEGWEEEEAS) and 1561–1576 (QDWEEGREESEADDLG). 6 positions are modified to phosphoserine: serine 1570, serine 1594, serine 1686, serine 1695, serine 1772, and serine 1774. The segment covering 1688-1709 (GFADEEESGEEGEEEDADEEGA) has biased composition (acidic residues). Over residues 1773 to 1788 (GSEESESASLEGEEGQ) the composition is skewed to acidic residues. Polar residues predominate over residues 1815-1824 (QSPNLDSEQV). Phosphoserine occurs at positions 1866, 1889, and 1890. Residues 1870 to 1893 (LGPSQPLKFTLSGVDGDSWSSGED) form a disordered region.

It belongs to the intermediate filament family. As to quaternary structure, forms homodimers and homotetramers in vitro. In mixtures with other intermediate filament proteins such as vimentin and alpha-internexin, this protein preferentially forms heterodimers which can assemble to form intermediate filaments if nestin does not exceed 25%. Interacts with FHOD3. In terms of processing, constitutively phosphorylated. This increases during mitosis when the cytoplasmic intermediate filament network is reorganized. In terms of tissue distribution, CNS stem cells.

In terms of biological role, required for brain and eye development. Promotes the disassembly of phosphorylated vimentin intermediate filaments (IF) during mitosis and may play a role in the trafficking and distribution of IF proteins and other cellular factors to daughter cells during progenitor cell division. Required for survival, renewal and mitogen-stimulated proliferation of neural progenitor cells. The sequence is that of Nestin (Nes) from Rattus norvegicus (Rat).